The chain runs to 284 residues: Tropomyosin (284 aa).

Disordered stretches follow at residues 1-27 and 99-131; these read MDAI…QMEQ and YERS…KVLE. The stretch at 1 to 273 forms a coiled coil; the sequence is MDAIKKKMQA…KERYKAISDD (273 aa). The span at 102-131 shows a compositional bias: basic and acidic residues; sequence SEEKLNSTTEKLEEASKAADESERNRKVLE.

Belongs to the tropomyosin family. In terms of assembly, homodimer.

Tropomyosin, in association with the troponin complex, plays a central role in the calcium dependent regulation of muscle contraction. The sequence is that of Tropomyosin from Mimachlamys nobilis (Noble scallop).